The following is a 177-amino-acid chain: ATP synthase subunit delta (177 aa).

Belongs to the ATPase delta chain family. As to quaternary structure, F-type ATPases have 2 components, F(1) - the catalytic core - and F(0) - the membrane proton channel. F(1) has five subunits: alpha(3), beta(3), gamma(1), delta(1), epsilon(1). F(0) has three main subunits: a(1), b(2) and c(10-14). The alpha and beta chains form an alternating ring which encloses part of the gamma chain. F(1) is attached to F(0) by a central stalk formed by the gamma and epsilon chains, while a peripheral stalk is formed by the delta and b chains.

It is found in the cell membrane. Functionally, f(1)F(0) ATP synthase produces ATP from ADP in the presence of a proton or sodium gradient. F-type ATPases consist of two structural domains, F(1) containing the extramembraneous catalytic core and F(0) containing the membrane proton channel, linked together by a central stalk and a peripheral stalk. During catalysis, ATP synthesis in the catalytic domain of F(1) is coupled via a rotary mechanism of the central stalk subunits to proton translocation. This protein is part of the stalk that links CF(0) to CF(1). It either transmits conformational changes from CF(0) to CF(1) or is implicated in proton conduction. The sequence is that of ATP synthase subunit delta from Caldanaerobacter subterraneus subsp. tengcongensis (strain DSM 15242 / JCM 11007 / NBRC 100824 / MB4) (Thermoanaerobacter tengcongensis).